The following is a 340-amino-acid chain: Glycerol-3-phosphate dehydrogenase [NAD(P)+] (340 aa).

Residues Ser11, Trp12, Arg33, and Lys106 each contribute to the NADPH site. Lys106, Gly137, and Ser139 together coordinate sn-glycerol 3-phosphate. Residue Ala141 coordinates NADPH. Positions 192, 245, 255, 256, and 257 each coordinate sn-glycerol 3-phosphate. Catalysis depends on Lys192, which acts as the Proton acceptor. Residue Arg256 coordinates NADPH. Positions 280 and 282 each coordinate NADPH.

The protein belongs to the NAD-dependent glycerol-3-phosphate dehydrogenase family.

It is found in the cytoplasm. It carries out the reaction sn-glycerol 3-phosphate + NAD(+) = dihydroxyacetone phosphate + NADH + H(+). The enzyme catalyses sn-glycerol 3-phosphate + NADP(+) = dihydroxyacetone phosphate + NADPH + H(+). It functions in the pathway membrane lipid metabolism; glycerophospholipid metabolism. Functionally, catalyzes the reduction of the glycolytic intermediate dihydroxyacetone phosphate (DHAP) to sn-glycerol 3-phosphate (G3P), the key precursor for phospholipid synthesis. The sequence is that of Glycerol-3-phosphate dehydrogenase [NAD(P)+] from Bacillus cereus (strain ATCC 10987 / NRS 248).